Consider the following 315-residue polypeptide: tRNA dimethylallyltransferase (315 aa).

18–25 (GPTASGKT) serves as a coordination point for ATP. 20-25 (TASGKT) lines the substrate pocket. 3 interaction with substrate tRNA regions span residues 43–46 (DSAL), 167–171 (QRLSR), and 248–253 (RCVGYR).

It belongs to the IPP transferase family. As to quaternary structure, monomer. Mg(2+) is required as a cofactor.

It carries out the reaction adenosine(37) in tRNA + dimethylallyl diphosphate = N(6)-dimethylallyladenosine(37) in tRNA + diphosphate. In terms of biological role, catalyzes the transfer of a dimethylallyl group onto the adenine at position 37 in tRNAs that read codons beginning with uridine, leading to the formation of N6-(dimethylallyl)adenosine (i(6)A). This chain is tRNA dimethylallyltransferase, found in Pseudoalteromonas atlantica (strain T6c / ATCC BAA-1087).